Consider the following 320-residue polypeptide: MKLNSLINLIQKSIYSCTLLLTILNIICIAPNSSNAFPIYAQQAYESPREATGRIVCANCHLAQKPVEIEAPQAVLPNTVFETVVKIPYDNNAKQILGNGSKGGLNVGAVVILPEGFKLAPANRLSPELKEKTKNLYIQPYSTKQSNILVIGPIPGDKNREIIFPILSPDPAKDKQAHFFKYPIYVGGNRGRGQIYPTGDKSNNNLISASASGKINKIEALEKGGFIVHITSTKDSEVNQSIPAGVELKVREGETIQLDQAISKDPNVGGFGQNETEIVLQSPNRIKGMIAFFFVSVLAQIFFVLKKKQFEKVQAAEMNF.

Residues 1–36 form the signal peptide; that stretch reads MKLNSLINLIQKSIYSCTLLLTILNIICIAPNSSNA. 4 residues coordinate heme: phenylalanine 37, cysteine 57, cysteine 60, and histidine 61. The helical transmembrane segment at 286-305 threads the bilayer; sequence IKGMIAFFFVSVLAQIFFVL.

It belongs to the cytochrome f family. In terms of assembly, the 4 large subunits of the cytochrome b6-f complex are cytochrome b6, subunit IV (17 kDa polypeptide, petD), cytochrome f and the Rieske protein, while the 4 small subunits are PetG, PetL, PetM and PetN. The complex functions as a dimer. It depends on heme as a cofactor.

The protein localises to the plastid. The protein resides in the chloroplast thylakoid membrane. Component of the cytochrome b6-f complex, which mediates electron transfer between photosystem II (PSII) and photosystem I (PSI), cyclic electron flow around PSI, and state transitions. The polypeptide is Cytochrome f (petA) (Porphyra purpurea (Red seaweed)).